The following is a 424-amino-acid chain: Serine--tRNA ligase (424 aa).

230-232 (TAE) contributes to the L-serine binding site. 261–263 (RSE) lines the ATP pocket. Glu284 provides a ligand contact to L-serine. 348–351 (EISS) serves as a coordination point for ATP. Ser384 lines the L-serine pocket.

It belongs to the class-II aminoacyl-tRNA synthetase family. Type-1 seryl-tRNA synthetase subfamily. As to quaternary structure, homodimer. The tRNA molecule binds across the dimer.

It is found in the cytoplasm. It carries out the reaction tRNA(Ser) + L-serine + ATP = L-seryl-tRNA(Ser) + AMP + diphosphate + H(+). The enzyme catalyses tRNA(Sec) + L-serine + ATP = L-seryl-tRNA(Sec) + AMP + diphosphate + H(+). It participates in aminoacyl-tRNA biosynthesis; selenocysteinyl-tRNA(Sec) biosynthesis; L-seryl-tRNA(Sec) from L-serine and tRNA(Sec): step 1/1. In terms of biological role, catalyzes the attachment of serine to tRNA(Ser). Is also able to aminoacylate tRNA(Sec) with serine, to form the misacylated tRNA L-seryl-tRNA(Sec), which will be further converted into selenocysteinyl-tRNA(Sec). The polypeptide is Serine--tRNA ligase (Streptococcus pneumoniae serotype 4 (strain ATCC BAA-334 / TIGR4)).